Reading from the N-terminus, the 189-residue chain is uncharacterized protein (189 aa).

The segment covering M1–V15 has biased composition (basic and acidic residues). The disordered stretch occupies residues M1–Q77. 2 stretches are compositionally biased toward acidic residues: residues E16–S29 and S46–D56. The span at V65–Q77 shows a compositional bias: polar residues.

This is an uncharacterized protein from Mus musculus (Mouse).